Here is a 314-residue protein sequence, read N- to C-terminus: Signal peptidase I (314 aa).

Residues 5-25 (LTIFLLISTLVTGIFWSFYCI) traverse the membrane as a helical segment. Over 26–63 (KSFKNYLINKKIINNNNFHQEKIEKSKNKTYFLKSLAS) the chain is Cytoplasmic. The chain crosses the membrane as a helical span at residues 64–84 (FFPIFLAIFIIRSFIYEPFQI). Residues 85 to 314 (PSGSMMPTLL…IRINRIGSIH (230 aa)) are Extracellular-facing. Active-site residues include serine 88 and lysine 143.

It belongs to the peptidase S26 family.

The protein localises to the cell membrane. The enzyme catalyses Cleavage of hydrophobic, N-terminal signal or leader sequences from secreted and periplasmic proteins.. This is Signal peptidase I (lepB) from Buchnera aphidicola subsp. Acyrthosiphon pisum (strain APS) (Acyrthosiphon pisum symbiotic bacterium).